The sequence spans 901 residues: Probable inorganic carbon transporter subunit DabA (901 aa).

Positions 424, 426, 606, and 621 each coordinate Zn(2+).

This sequence belongs to the inorganic carbon transporter (TC 9.A.2) DabA family. Forms a complex with DabB. Requires Zn(2+) as cofactor.

It is found in the cell membrane. In terms of biological role, part of an energy-coupled inorganic carbon pump. This Staphylococcus aureus (strain USA300) protein is Probable inorganic carbon transporter subunit DabA.